Consider the following 135-residue polypeptide: MARTKQTARKSTGGKAPRKQLATKAARKSTPSTCGVKPHRYRPGTVALREIRRYQKSTELLIRKLPFQRLVREIAQDFNTDLRFQSAAVGALQEASEAYLVGLLEDTNLCAIHAKRVTIMPKDIQLARRIRGERA.

Positions 1–41 are disordered; sequence MARTKQTARKSTGGKAPRKQLATKAARKSTPSTCGVKPHRY. Arg3 is modified (asymmetric dimethylarginine; by PRMT6; alternate). Arg3 bears the Citrulline; alternate mark. Thr4 bears the Phosphothreonine; by HASPIN mark. Residue Lys5 is modified to Allysine; alternate. Lys5 carries the N6,N6,N6-trimethyllysine; alternate modification. At Lys5 the chain carries N6,N6-dimethyllysine; alternate. Lys5 is subject to N6-(2-hydroxyisobutyryl)lysine; alternate. Lys5 is subject to N6-(beta-hydroxybutyryl)lysine; alternate. An N6-acetyllysine; alternate modification is found at Lys5. Residue Lys5 is modified to N6-methyllysine; alternate. Gln6 is subject to 5-glutamyl dopamine; alternate. Gln6 carries the 5-glutamyl serotonin; alternate modification. Thr7 bears the Phosphothreonine; by PKC mark. Arg9 bears the Citrulline; alternate mark. Symmetric dimethylarginine; by PRMT5; alternate is present on Arg9. Lys10 carries the post-translational modification N6,N6,N6-trimethyllysine; alternate. N6,N6-dimethyllysine; alternate is present on Lys10. Lys10 bears the N6-(2-hydroxyisobutyryl)lysine; alternate mark. Lys10 carries the post-translational modification N6-(beta-hydroxybutyryl)lysine; alternate. Position 10 is an N6-acetyllysine; alternate (Lys10). Lys10 carries the post-translational modification N6-methyllysine; alternate. Position 10 is an N6-lactoyllysine; alternate (Lys10). Ser11 bears the ADP-ribosylserine; alternate mark. At Ser11 the chain carries Phosphoserine; alternate; by AURKB, AURKC, RPS6KA3, RPS6KA4 and RPS6KA5. Thr12 carries the post-translational modification Phosphothreonine; by PKC. Lys15 bears the N6-(2-hydroxyisobutyryl)lysine; alternate mark. Lys15 bears the N6-(beta-hydroxybutyryl)lysine; alternate mark. Lys15 carries the N6-acetyllysine; alternate modification. Lys15 is modified (N6-lactoyllysine; alternate). Lys15 is modified (N6-glutaryllysine; alternate). An N6-succinyllysine; alternate modification is found at Lys15. Arg18 bears the Citrulline; alternate mark. The residue at position 18 (Arg18) is an Asymmetric dimethylarginine; by CARM1; alternate. Lys19 and Lys24 each carry N6-(2-hydroxyisobutyryl)lysine; alternate. Lys19 and Lys24 each carry N6-(beta-hydroxybutyryl)lysine; alternate. N6-acetyllysine; alternate occurs at positions 19 and 24. Lys19 and Lys24 each carry N6-methyllysine; alternate. Lys19 and Lys24 each carry N6-lactoyllysine; alternate. N6-glutaryllysine; alternate is present on residues Lys19 and Lys24. Residues Lys19 and Lys24 each carry the N6-butyryllysine; alternate modification. Arg27 is subject to Citrulline. Lys28 carries the N6,N6,N6-trimethyllysine; alternate modification. An N6,N6-dimethyllysine; alternate modification is found at Lys28. Lys28 bears the N6-(2-hydroxyisobutyryl)lysine; alternate mark. Position 28 is an N6-acetyllysine; alternate (Lys28). The residue at position 28 (Lys28) is an N6-methyllysine; alternate. N6-lactoyllysine; alternate is present on Lys28. Lys28 carries the post-translational modification N6-glutaryllysine; alternate. Ser29 bears the ADP-ribosylserine; alternate mark. At Ser29 the chain carries Phosphoserine; alternate; by AURKB, AURKC and RPS6KA5. Ser32 carries the post-translational modification Phosphoserine. An N6-methyllysine modification is found at Lys37. Phosphotyrosine is present on Tyr41. N6,N6,N6-trimethyllysine; alternate is present on Lys56. An N6-(2-hydroxyisobutyryl)lysine; alternate modification is found at Lys56. An N6-(beta-hydroxybutyryl)lysine; alternate modification is found at Lys56. The residue at position 56 (Lys56) is an N6-acetyllysine; alternate. At Lys56 the chain carries N6-lactoyllysine; alternate. Position 56 is an N6-glutaryllysine; alternate (Lys56). An N6-succinyllysine; alternate modification is found at Lys56. At Lys56 the chain carries N6-methyllysine; by EHMT2; alternate. At Ser57 the chain carries Phosphoserine. Lys64 is modified (N6-(2-hydroxyisobutyryl)lysine; alternate). Lys64 is modified (N6-methyllysine; alternate). Thr80 carries the phosphothreonine modification. Phosphoserine is present on Ser86. A Phosphothreonine modification is found at Thr107. An N6-glutaryllysine; alternate mark is found at Lys115 and Lys122. Residue Lys115 is modified to N6-acetyllysine. Lys122 is modified (N6-(2-hydroxyisobutyryl)lysine; alternate). Lys122 carries the post-translational modification N6-acetyllysine; alternate. An N6-methyllysine; alternate modification is found at Lys122. N6-succinyllysine; alternate is present on Lys122.

It belongs to the histone H3 family. As to quaternary structure, the nucleosome is a histone octamer containing two molecules each of H2A, H2B, H3 and H4 assembled in one H3-H4 heterotetramer and two H2A-H2B heterodimers. The octamer wraps approximately 147 bp of DNA. Post-translationally, acetylation is generally linked to gene activation. Acetylation on Lys-10 (H3K9ac) impairs methylation at Arg-9 (H3R8me2s). Acetylation on Lys-19 (H3K18ac) and Lys-24 (H3K24ac) favors methylation at Arg-18 (H3R17me). Acetylation at Lys-122 (H3K122ac) by EP300/p300 plays a central role in chromatin structure: localizes at the surface of the histone octamer and stimulates transcription, possibly by promoting nucleosome instability. In terms of processing, citrullination at Arg-9 (H3R8ci) and/or Arg-18 (H3R17ci) by PADI4 impairs methylation and represses transcription. Asymmetric dimethylation at Arg-18 (H3R17me2a) by CARM1 is linked to gene activation. Symmetric dimethylation at Arg-9 (H3R8me2s) by PRMT5 is linked to gene repression. Asymmetric dimethylation at Arg-3 (H3R2me2a) by PRMT6 is linked to gene repression and is mutually exclusive with H3 Lys-5 methylation (H3K4me2 and H3K4me3). H3R2me2a is present at the 3' of genes regardless of their transcription state and is enriched on inactive promoters, while it is absent on active promoters. Post-translationally, methylation at Lys-5 (H3K4me) is linked to gene activation. Methylation at Lys-5 (H3K4me) facilitates subsequent acetylation of H3 and H4. Methylation at Lys-10 (H3K9me) and Lys-28 (H3K27me) are linked to gene repression. Methylation at Lys-10 (H3K9me) is a specific target for HP1 proteins (CBX1, CBX3 and CBX5) and prevents subsequent phosphorylation at Ser-11 (H3S10ph) and acetylation of H3 and H4. Methylation at Lys-5 (H3K4me) requires preliminary monoubiquitination of H2B at 'Lys-120'. Methylation at Lys-10 (H3K9me) and Lys-28 (H3K27me) are enriched in inactive X chromosome chromatin. Monomethylation at Lys-56 (H3K56me1) by EHMT2/G9A in G1 phase promotes interaction with PCNA and is required for DNA replication. In terms of processing, phosphorylated at Thr-4 (H3T3ph) by HASPIN during prophase and dephosphorylated during anaphase. Phosphorylation at Ser-11 (H3S10ph) by AURKB is crucial for chromosome condensation and cell-cycle progression during mitosis and meiosis. In addition phosphorylation at Ser-11 (H3S10ph) by RPS6KA4 and RPS6KA5 is important during interphase because it enables the transcription of genes following external stimulation, like mitogens, stress, growth factors or UV irradiation and result in the activation of genes, such as c-fos and c-jun. Phosphorylation at Ser-11 (H3S10ph), which is linked to gene activation, prevents methylation at Lys-10 (H3K9me) but facilitates acetylation of H3 and H4. Phosphorylation at Ser-11 (H3S10ph) by AURKB mediates the dissociation of HP1 proteins (CBX1, CBX3 and CBX5) from heterochromatin. Phosphorylation at Ser-11 (H3S10ph) is also an essential regulatory mechanism for neoplastic cell transformation. Phosphorylated at Ser-29 (H3S28ph) by MAP3K20 isoform 1, RPS6KA5 or AURKB during mitosis or upon ultraviolet B irradiation. Phosphorylation at Thr-7 (H3T6ph) by PRKCB is a specific tag for epigenetic transcriptional activation that prevents demethylation of Lys-5 (H3K4me) by LSD1/KDM1A. At centromeres, specifically phosphorylated at Thr-12 (H3T11ph) from prophase to early anaphase, by DAPK3 and PKN1. Phosphorylation at Thr-12 (H3T11ph) by PKN1 or isoform M2 of PKM (PKM2) is a specific tag for epigenetic transcriptional activation that promotes demethylation of Lys-10 (H3K9me) by KDM4C/JMJD2C. Phosphorylation at Tyr-41 (H3Y41ph) by JAK2 promotes exclusion of CBX5 (HP1 alpha) from chromatin. Lysine deamination at Lys-5 (H3K4all) to form allysine is mediated by LOXL2. Allysine formation by LOXL2 only takes place on H3K4me3 and results in gene repression. Post-translationally, butyrylation of histones marks active promoters and competes with histone acetylation. It is present during late spermatogenesis. In terms of processing, succinylated. Desuccinylation at Lys-122 (H3K122succ) by SIRT7 in response to DNA damage promotes chromatin condensation and double-strand breaks (DSBs) repair. Serine ADP-ribosylation constitutes the primary form of ADP-ribosylation of proteins in response to DNA damage. Serine ADP-ribosylation at Ser-11 (H3S10ADPr) is mutually exclusive with phosphorylation at Ser-11 (H3S10ph) and impairs acetylation at Lys-10 (H3K9ac). As to expression, specifically expressed in the seminiferous tubules of testis.

Its subcellular location is the nucleus. It is found in the chromosome. Its function is as follows. Core component of nucleosome. Nucleosomes wrap and compact DNA into chromatin, limiting DNA accessibility to the cellular machineries which require DNA as a template. Histones thereby play a central role in transcription regulation, DNA repair, DNA replication and chromosomal stability. DNA accessibility is regulated via a complex set of post-translational modifications of histones, also called histone code, and nucleosome remodeling. Hominid-specific H3.5/H3F3C preferentially colocalizes with euchromatin, and it is associated with actively transcribed genes. The chain is Histone H3.3C from Homo sapiens (Human).